We begin with the raw amino-acid sequence, 1273 residues long: MSVKEGAQRKWAALKEKLGPQDSDPTEANLESAEPELCIRLLQMPSVVNYSGLRKRLESSDGGWMVQFLEQSGLDLLLEALARLSGRGVARISDALLQLTCISCVRAVMNSQQGIEYILSNQGYVRQLSQALDTSNVMVKKQVFELLAALCIYSPEGHALTLDALDHYKMVCSQQYRFSVIMSELSDSDNVPYVVTLLSVINAIILGPEDLRSRAQLRSEFIGLQLLDILTRLRDLEDADLLIQLEAFEEAKAEDEEELQRISDGINMNSHQEVFASLFHKVSCSPASAQLLSVLQGLMHLEPAGRSGQLLWEALENLVNRAVLLASDAQACTLEEVVERLLSIKGRPRPSPLDKAHKSVQTNSVQNQGSSSQNTTTPTTKVEGQQPVVASPCQHVGSIQSSSVDIAPQPVALEQCITALPLPTPPLSSSTPVLPPTPPPLPGPGATSPLPPPPPPLPPPLPGSGTTSPPPPPPPPPPLPPPLPGSGTISPPPPPPPPPLPGTGAVSPPPPPPLPSLPDSHKTQPPPPPPPPLPGMCPVPPPPPLPRAGQIPPPPPLPGFSVPSMMGGVEEIIVAQVDHSLGSAWVPSHRRVNPPTLRMKKLNWQKLPSNVARERNSMWATLGSPCTAAVEPDFSSIEQLFSFPTAKPKEPSAAPARKEPKEVTFLDSKKSLNLNIFLKQFKCSNEEVTSMIQAGDTSKFDVEVLKQLLKLLPEKHEIENLRAFTEERAKLSNADQFYVLLLDIPCYPLRVECMMLCEGTAIVLDMVRPKAQLVLTACESLLTSQRLPVFCQLILKIGNFLNYGSHTGDADGFKISTLLKLTETKSQQSRVTLLHHVLEEVEKSHPDLLQLSRDLEPPSQAAGINVEIIHSEASANLKKLLEAERKVSASIPEVQKQYAERLQASIEASQELDKVFDAIEQKKLELADYLCEDPQQLSLEDTFSTMKTFRDLFTRALKENKDRKEQMAKAERRKQQLAEEEARRPRDEDGKPIRKGPGKQEEVCVIDALLADIRKGFQLRKTARGRGDTEASGRVAPTDPPKATEPATASNPTQGTNHPASEPLDTTAADEPQGWDLVDAVTPSPQPSKEEDGPPALERRSSWYVDAIDFLDPEDTPDAQPSEGVWPVTLGDGQALNPLEFSSNKPPGVKSSHQDATDPEALWGVHQTEADSTSEGPEDEAQRGQSTHLPRTGPGEDEDGEDTAPESALDTSLDRSFSEDAVTDSSGSGTLPRVQGRVSKGTSKRRKKRPSRNQEEFVPDSDDIKAKRLCVIQ.

5 disordered regions span residues 1–30, 346–387, 427–559, 960–999, and 1021–1273; these read MSVKEGAQRKWAALKEKLGPQDSDPTEANL, GRPR…GQQP, LSSS…PLPG, NKDRKEQMAKAERRKQQLAEEEARRPRDEDGKPIRKGPGK, and KTAR…CVIQ. Position 2 is an N-acetylserine (Ser-2). A GBD/FH3 domain is found at 2–330; that stretch reads SVKEGAQRKW…RAVLLASDAQ (329 aa). At Ser-351 the chain carries Phosphoserine. Residues 359 to 382 show a composition bias toward low complexity; it reads SVQTNSVQNQGSSSQNTTTPTTKV. An FH1 domain is found at 421–564; sequence PLPTPPLSSS…PPLPGFSVPS (144 aa). Pro residues-rich tracts occupy residues 433–516 and 524–558; these read VLPP…PLPS and QPPPPPPPPLPGMCPVPPPPPLPRAGQIPPPPPLP. Residues 589-979 enclose the FH2 domain; sequence HRRVNPPTLR…AERRKQQLAE (391 aa). Positions 907–984 form a coiled coil; it reads EASQELDKVF…QQLAEEEARR (78 aa). The region spanning 1007–1022 is the WH2 domain; the sequence is DALLADIRKGFQLRKT. A compositionally biased stretch (polar residues) spans 1047-1059; that stretch reads ATASNPTQGTNHP. Positions 1088 to 1101 are enriched in basic and acidic residues; the sequence is SKEEDGPPALERRS. 2 positions are modified to phosphoserine: Ser-1172 and Ser-1174. A compositionally biased stretch (acidic residues) spans 1195 to 1204; sequence GEDEDGEDTA. Thr-1203 carries the post-translational modification Phosphothreonine. 2 positions are modified to phosphoserine: Ser-1216 and Ser-1218. A phosphothreonine mark is found at Thr-1223 and Thr-1230. Positions 1242–1251 are enriched in basic residues; sequence TSKRRKKRPS.

It belongs to the formin homology family. As to quaternary structure, interacts with profilin and actin at the FH1 and FH2 domains respectively. Interacts with DAAM2.

The protein localises to the cytoplasm. Its subcellular location is the perinuclear region. Phosphate inhibits both the depolymerization and severing activities. Severs actin filaments and accelerates their polymerization and depolymerization. The protein is Inverted formin-2 (Inf2) of Mus musculus (Mouse).